A 140-amino-acid chain; its full sequence is Class I hydrophobin C (140 aa).

The N-terminal stretch at 1-23 (MKFFVPAFLFAATAMALPGSGSA) is a signal peptide. 4 disulfides stabilise this stretch: cysteine 41–cysteine 114, cysteine 49–cysteine 108, cysteine 50–cysteine 85, and cysteine 115–cysteine 133.

This sequence belongs to the fungal hydrophobin family.

Its subcellular location is the secreted. The protein localises to the cell wall. Functionally, aerial growth, conidiation, and dispersal of filamentous fungi in the environment rely upon a capability of their secreting small amphipathic proteins called hydrophobins (HPBs) with low sequence identity. Class I can self-assemble into an outermost layer of rodlet bundles on aerial cell surfaces, conferring cellular hydrophobicity that supports fungal growth, development and dispersal; whereas Class II form highly ordered films at water-air interfaces through intermolecular interactions but contribute nothing to the rodlet structure. In P.expansum, hydrophobins contribute to germination, tolerance to cold stress and mycotoxins patulin and citrinin production. HfbC is involved in the virulence on apple. The chain is Class I hydrophobin C from Penicillium expansum (Blue mold rot fungus).